The sequence spans 129 residues: Small ribosomal subunit protein uS11 (129 aa).

It belongs to the universal ribosomal protein uS11 family. In terms of assembly, part of the 30S ribosomal subunit. Interacts with proteins S7 and S18. Binds to IF-3.

In terms of biological role, located on the platform of the 30S subunit, it bridges several disparate RNA helices of the 16S rRNA. Forms part of the Shine-Dalgarno cleft in the 70S ribosome. The polypeptide is Small ribosomal subunit protein uS11 (Pectobacterium atrosepticum (strain SCRI 1043 / ATCC BAA-672) (Erwinia carotovora subsp. atroseptica)).